The following is a 1065-amino-acid chain: Carbamoyl phosphate synthase large chain (1065 aa).

The tract at residues Met1–Glu401 is carboxyphosphate synthetic domain. Residues Arg129, Arg169, Gly175, Gly176, Gln208, Val210, Glu215, Gly241, Val242, His243, Gln284, and Glu298 each contribute to the ATP site. Residues Lys133–Val327 enclose the ATP-grasp 1 domain. Mg(2+) is bound by residues Gln284, Glu298, and Asn300. Residues Gln284, Glu298, and Asn300 each coordinate Mn(2+). The oligomerization domain stretch occupies residues Gly402 to Asn548. Positions Glu549–Gly931 are carbamoyl phosphate synthetic domain. The 191-residue stretch at Ser673–Thr863 folds into the ATP-grasp 2 domain. 10 residues coordinate ATP: Arg709, Lys748, Ile750, Glu754, Gly779, Val780, His781, Ser782, Gln822, and Glu834. Mg(2+) is bound by residues Gln822, Glu834, and Asn836. Residues Gln822, Glu834, and Asn836 each coordinate Mn(2+). An MGS-like domain is found at Ile932–Lys1065. Residues Ile932–Lys1065 are allosteric domain.

This sequence belongs to the CarB family. As to quaternary structure, composed of two chains; the small (or glutamine) chain promotes the hydrolysis of glutamine to ammonia, which is used by the large (or ammonia) chain to synthesize carbamoyl phosphate. Tetramer of heterodimers (alpha,beta)4. Requires Mg(2+) as cofactor. Mn(2+) is required as a cofactor.

The enzyme catalyses hydrogencarbonate + L-glutamine + 2 ATP + H2O = carbamoyl phosphate + L-glutamate + 2 ADP + phosphate + 2 H(+). The catalysed reaction is hydrogencarbonate + NH4(+) + 2 ATP = carbamoyl phosphate + 2 ADP + phosphate + 2 H(+). Its pathway is amino-acid biosynthesis; L-arginine biosynthesis; carbamoyl phosphate from bicarbonate: step 1/1. The protein operates within pyrimidine metabolism; UMP biosynthesis via de novo pathway; (S)-dihydroorotate from bicarbonate: step 1/3. Functionally, large subunit of the glutamine-dependent carbamoyl phosphate synthetase (CPSase). CPSase catalyzes the formation of carbamoyl phosphate from the ammonia moiety of glutamine, carbonate, and phosphate donated by ATP, constituting the first step of 2 biosynthetic pathways, one leading to arginine and/or urea and the other to pyrimidine nucleotides. The large subunit (synthetase) binds the substrates ammonia (free or transferred from glutamine from the small subunit), hydrogencarbonate and ATP and carries out an ATP-coupled ligase reaction, activating hydrogencarbonate by forming carboxy phosphate which reacts with ammonia to form carbamoyl phosphate. The polypeptide is Carbamoyl phosphate synthase large chain (Clostridium acetobutylicum (strain ATCC 824 / DSM 792 / JCM 1419 / IAM 19013 / LMG 5710 / NBRC 13948 / NRRL B-527 / VKM B-1787 / 2291 / W)).